The following is a 241-amino-acid chain: 1-(5-phosphoribosyl)-5-[(5-phosphoribosylamino)methylideneamino] imidazole-4-carboxamide isomerase (241 aa).

The Proton acceptor role is filled by aspartate 8. The Proton donor role is filled by aspartate 129.

It belongs to the HisA/HisF family.

It localises to the cytoplasm. It carries out the reaction 1-(5-phospho-beta-D-ribosyl)-5-[(5-phospho-beta-D-ribosylamino)methylideneamino]imidazole-4-carboxamide = 5-[(5-phospho-1-deoxy-D-ribulos-1-ylimino)methylamino]-1-(5-phospho-beta-D-ribosyl)imidazole-4-carboxamide. It participates in amino-acid biosynthesis; L-histidine biosynthesis; L-histidine from 5-phospho-alpha-D-ribose 1-diphosphate: step 4/9. The polypeptide is 1-(5-phosphoribosyl)-5-[(5-phosphoribosylamino)methylideneamino] imidazole-4-carboxamide isomerase (Chloroflexus aggregans (strain MD-66 / DSM 9485)).